Reading from the N-terminus, the 448-residue chain is 26S proteasome regulatory subunit 4 homolog (448 aa).

The segment covering 1 to 10 (MGQAQSGNFS) has biased composition (polar residues). The segment at 1–58 (MGQAQSGNFSNFGDGANGDNKKDQKKDKPKYEPPVPTRTGRRKKKAQSGPDASAKLPT) is disordered. Residues 19 to 31 (DNKKDQKKDKPKY) show a composition bias toward basic and acidic residues. ATP is bound at residue 232–239 (GAPGTGKT).

Belongs to the AAA ATPase family.

It is found in the cytoplasm. It localises to the nucleus. In terms of biological role, the 26S proteasome is involved in the ATP-dependent degradation of ubiquitinated proteins. The regulatory (or ATPase) complex confers ATP dependency and substrate specificity to the 26S complex. The protein is 26S proteasome regulatory subunit 4 homolog (mts2) of Schizosaccharomyces pombe (strain 972 / ATCC 24843) (Fission yeast).